A 104-amino-acid polypeptide reads, in one-letter code: uncharacterized protein (104 aa).

Positions 51–70 (NPGRSLDNNKDVSDKGRSEF) are disordered. Residues 57–70 (DNNKDVSDKGRSEF) show a composition bias toward basic and acidic residues.

The protein belongs to the protein-tyrosine phosphatase family.

This is an uncharacterized protein from Xanthomonas campestris pv. campestris (strain ATCC 33913 / DSM 3586 / NCPPB 528 / LMG 568 / P 25).